The chain runs to 263 residues: Zinc transporter ZupT (263 aa).

Transmembrane regions (helical) follow at residues 1–21, 37–57, 68–88, 116–136, and 138–158; these read MLFAFGLTLFAGLATGIGGLI, LGFSVGVMLYVSFVEILPGAF, GGSWAAVIGFFGGIALIAIID, MMKMGVLTALAIAIHNFPEGF, and TFLAGLSDPMIAIPVAVAIAI. Positions 131 and 134 each coordinate Fe(2+). E134 is a binding site for Zn(2+). A Zn(2+)-binding site is contributed by H159. Residues N160, E163, and E192 each coordinate Fe(2+). E163 serves as a coordination point for Zn(2+). 3 consecutive transmembrane segments (helical) span residues 184 to 204, 206 to 226, and 243 to 263; these read WATLSGLAEPAGALIGFLLLM, FIGPEALGLCFAAVAGVMVFI, and TAIYGLIAGMAVMAISLLLFI.

This sequence belongs to the ZIP transporter (TC 2.A.5) family. ZupT subfamily.

The protein resides in the cell membrane. The enzyme catalyses Zn(2+)(in) = Zn(2+)(out). In terms of biological role, mediates zinc uptake. May also transport other divalent cations. This Corynebacterium glutamicum (strain ATCC 13032 / DSM 20300 / JCM 1318 / BCRC 11384 / CCUG 27702 / LMG 3730 / NBRC 12168 / NCIMB 10025 / NRRL B-2784 / 534) protein is Zinc transporter ZupT.